Consider the following 336-residue polypeptide: Protein-arginine kinase (336 aa).

The Phosphagen kinase C-terminal domain occupies 22-245 (IVMSSRIRLA…QQIINEEMQI (224 aa)). Residues 25-29 (SSRIR), His-83, Arg-116, 167-171 (RASVM), and 198-203 (RGIYGE) contribute to the ATP site.

It belongs to the ATP:guanido phosphotransferase family.

The enzyme catalyses L-arginyl-[protein] + ATP = N(omega)-phospho-L-arginyl-[protein] + ADP + H(+). Functionally, catalyzes the specific phosphorylation of arginine residues in proteins. The sequence is that of Protein-arginine kinase from Staphylococcus saprophyticus subsp. saprophyticus (strain ATCC 15305 / DSM 20229 / NCIMB 8711 / NCTC 7292 / S-41).